The following is a 382-amino-acid chain: Opsin Rh5 (382 aa).

Residues 1 to 49 are Extracellular-facing; sequence MHINGPSGPQAYVNDSLGDGSVFPMGHGYPAEYQHMVHAHWRGFREAPI. The N-linked (GlcNAc...) asparagine glycan is linked to Asn-14. The helical transmembrane segment at 50-76 threads the bilayer; that stretch reads YYHAGFYIAFIVLMLSSIFGNGLVIWI. Residues 77–88 lie on the Cytoplasmic side of the membrane; that stretch reads FSTSKSLRTPSN. A helical transmembrane segment spans residues 89–112; the sequence is LLILNLAIFDLFMCTNMPHYLINA. Over 113 to 127 the chain is Extracellular; the sequence is TVGYIVGGDLGCDIY. Cysteines 124 and 201 form a disulfide. The chain crosses the membrane as a helical span at residues 128 to 147; that stretch reads ALNGGISGMGASITNAFIAF. Topologically, residues 148-165 are cytoplasmic; that stretch reads DRYKTISNPIDGRLSYGQ. Residues 166–190 form a helical membrane-spanning segment; sequence IVLLILFTWLWATPFSVLPLFQIWG. Topologically, residues 191–214 are extracellular; sequence RYQPEGFLTTCSFDYLTNTDENRL. The chain crosses the membrane as a helical span at residues 215 to 242; it reads FVRTIFVWSYVIPMTMILVSYYKLFTHV. The Cytoplasmic segment spans residues 243 to 278; it reads RVHEKMLAEQAKKMNVKSLSANANADNMSVELRIAK. Residues 279-302 form a helical membrane-spanning segment; the sequence is AALIIYMLFILAWTPYSVVALIGC. Topologically, residues 303–310 are extracellular; it reads FGEQQLIT. A helical transmembrane segment spans residues 311–335; it reads PFVSMLPCLACKSVSCLDPWVYATS. Position 322 is an N6-(retinylidene)lysine (Lys-322). Residues 336-382 are Cytoplasmic-facing; sequence HPKYRLELERRLPWLGIREKHATSGTSGGQESVASVSGDTLALSVQN. Residues 357–382 are disordered; the sequence is ATSGTSGGQESVASVSGDTLALSVQN. Residues 358-382 show a composition bias toward polar residues; that stretch reads TSGTSGGQESVASVSGDTLALSVQN.

Belongs to the G-protein coupled receptor 1 family. Opsin subfamily. In terms of processing, phosphorylated on some or all of the serine and threonine residues present in the C-terminal region. As to expression, expressed specifically in the retina. Each Drosophila eye is composed of 800 facets or ommatidia. Each ommatidium contains 8 photoreceptor cells (R1-R8), the R1 to R6 cells are outer cells, while R7 and R8 are inner cells. Rh5 is expressed only in R8 photoreceptor cells in a subset of ommatidia.

It is found in the cell projection. Its subcellular location is the rhabdomere membrane. In terms of biological role, visual pigments are the light-absorbing molecules that mediate vision. They consist of an apoprotein, opsin, covalently linked to cis-retinal. This chain is Opsin Rh5 (Rh5), found in Drosophila melanogaster (Fruit fly).